Here is a 206-residue protein sequence, read N- to C-terminus: Large ribosomal subunit protein uL4 (206 aa).

Residues 49–76 (QSAKTRTEVRGGGIKPWRQKGTGRARQG) are disordered.

The protein belongs to the universal ribosomal protein uL4 family. As to quaternary structure, part of the 50S ribosomal subunit.

In terms of biological role, one of the primary rRNA binding proteins, this protein initially binds near the 5'-end of the 23S rRNA. It is important during the early stages of 50S assembly. It makes multiple contacts with different domains of the 23S rRNA in the assembled 50S subunit and ribosome. Forms part of the polypeptide exit tunnel. This chain is Large ribosomal subunit protein uL4, found in Clostridium botulinum (strain Alaska E43 / Type E3).